The primary structure comprises 260 residues: Small ribosomal subunit protein uS2 (260 aa).

Belongs to the universal ribosomal protein uS2 family.

The chain is Small ribosomal subunit protein uS2 from Roseobacter denitrificans (strain ATCC 33942 / OCh 114) (Erythrobacter sp. (strain OCh 114)).